The primary structure comprises 425 residues: Putative type I restriction enzyme MjaX specificity subunit (425 aa).

It belongs to the type-I restriction system S methylase family.

In terms of biological role, a putative specificity (S) subunit of a type I restriction enzyme thought to recognize 5'-TAGN(6)TGC-3'; the other subunits are unknown. The chain is Putative type I restriction enzyme MjaX specificity subunit from Methanocaldococcus jannaschii (strain ATCC 43067 / DSM 2661 / JAL-1 / JCM 10045 / NBRC 100440) (Methanococcus jannaschii).